A 454-amino-acid polypeptide reads, in one-letter code: Chromosomal replication initiator protein DnaA (454 aa).

A domain I, interacts with DnaA modulators region spans residues 1-77 (MASLNENQKF…GFEVFGRMID (77 aa)). A domain II region spans residues 77–115 (DYELYANDELTDIELRRLNNQSPVDEPLSVAKPTSPLVS). The tract at residues 116-332 (GLNEKYNFEN…GALNRVEFVA (217 aa)) is domain III, AAA+ region. ATP is bound by residues Gly-160, Gly-162, Lys-163, and Thr-164. The segment at 333–454 (RANGISIVDI…KDIDSIKRKF (122 aa)) is domain IV, binds dsDNA.

Belongs to the DnaA family. Oligomerizes as a right-handed, spiral filament on DNA at oriC.

The protein localises to the cytoplasm. In terms of biological role, plays an essential role in the initiation and regulation of chromosomal replication. ATP-DnaA binds to the origin of replication (oriC) to initiate formation of the DNA replication initiation complex once per cell cycle. Binds the DnaA box (a 9 base pair repeat at the origin) and separates the double-stranded (ds)DNA. Forms a right-handed helical filament on oriC DNA; dsDNA binds to the exterior of the filament while single-stranded (ss)DNA is stabiized in the filament's interior. The ATP-DnaA-oriC complex binds and stabilizes one strand of the AT-rich DNA unwinding element (DUE), permitting loading of DNA polymerase. After initiation quickly degrades to an ADP-DnaA complex that is not apt for DNA replication. Binds acidic phospholipids. The polypeptide is Chromosomal replication initiator protein DnaA (Lactococcus lactis subsp. cremoris (strain MG1363)).